A 149-amino-acid polypeptide reads, in one-letter code: Deoxyuridine 5'-triphosphate nucleotidohydrolase (149 aa).

Substrate is bound by residues 68 to 70, Asn-81, and 85 to 87; these read RSG and LID.

Belongs to the dUTPase family. The cofactor is Mg(2+).

It carries out the reaction dUTP + H2O = dUMP + diphosphate + H(+). It participates in pyrimidine metabolism; dUMP biosynthesis; dUMP from dCTP (dUTP route): step 2/2. Its function is as follows. This enzyme is involved in nucleotide metabolism: it produces dUMP, the immediate precursor of thymidine nucleotides and it decreases the intracellular concentration of dUTP so that uracil cannot be incorporated into DNA. This is Deoxyuridine 5'-triphosphate nucleotidohydrolase from Azoarcus sp. (strain BH72).